The sequence spans 247 residues: ATP synthase subunit a, chloroplastic (247 aa).

5 consecutive transmembrane segments (helical) span residues Q38–V58, V95–L115, I134–T154, L199–L219, and G220–G240.

The protein belongs to the ATPase A chain family. F-type ATPases have 2 components, CF(1) - the catalytic core - and CF(0) - the membrane proton channel. CF(1) has five subunits: alpha(3), beta(3), gamma(1), delta(1), epsilon(1). CF(0) has four main subunits: a, b, b' and c.

The protein localises to the plastid. The protein resides in the chloroplast thylakoid membrane. In terms of biological role, key component of the proton channel; it plays a direct role in the translocation of protons across the membrane. In Ranunculus macranthus (Large buttercup), this protein is ATP synthase subunit a, chloroplastic.